The following is a 57-amino-acid chain: GRSHMVLNSALEGARGGPGGEEIPERFSIPELQWMLSNAELAPVQADEPPQSRMDLV.

Residues 1–26 (GRSHMVLNSALEGARGGPGGEEIPER) form a disordered region.

This sequence belongs to the somatostatin family.

It localises to the secreted. Somatostatin inhibits the release of somatotropin. This is Somatostatin-2 (sst2) from Piaractus mesopotamicus (Small-scaled pacu).